The chain runs to 680 residues: WD repeat-containing protein 48 homolog (680 aa).

WD repeat units lie at residues 26 to 65 (QHRN…SEKY), 71 to 110 (HHND…CMST), 113 to 152 (THRD…ALTA), 164 to 203 (GSKD…RSMK), 206 to 245 (GHTE…CVQT), 248 to 287 (VHKE…NKTL), 290 to 329 (EEQA…RCTM), and 350 to 389 (KGGA…KKEQ). The interval 592–616 (ETTPSGGNANNSLQNSQSDANSEGS) is disordered.

It belongs to the WD repeat WDR48 family. As to quaternary structure, catalytic component of the Usp12-46 deubiquitylase complex consisting of Usp12-46, Wdr20 and Uaf1; regulatory subunit that, together wtih Wdr20, stabilizes Usp12-46. The Usp12-46 deubiquitylase complex associates with arr/arrow; the interaction leads to deubiquitination and stabilization of arr/arrow.

In terms of biological role, regulatory component of the Usp12-46 deubiquitylase complex. activates deubiquitination by increasing the catalytic turnover without increasing the affinity of deubiquitinating enzymes for the substrate. The complex deubiquitylates the wg/wingless-signaling receptor arr/arrow, which stabilizes the receptor and increases its concentration at the cell surface; this enhances the sensitivity of cells to wg/wingless-signal stimulation. This increases the amplitude and spatial range of the signaling response to the wg/wingless morphogen gradient, facilitating the precise concentration-dependent regulation of its target genes. Together with Wdr20 and Usp12-46 required for wg/wingless-mediated signaling in the wing imaginal disc and for wg/wingless-dependent regulation of intestinal stem cell proliferation. This Drosophila yakuba (Fruit fly) protein is WD repeat-containing protein 48 homolog.